The chain runs to 580 residues: Trafficking protein particle complex subunit 14 (580 aa).

Disordered regions lie at residues 95–134 and 480–533; these read GSAGDQDADPPGGGDPGGGGLFRGCSPLLTHGQGPATSGG and VSHP…RSGS. Positions 105-116 are enriched in gly residues; it reads PGGGDPGGGGLF. A Phosphoserine modification is found at Ser-491. Residues 492–502 are compositionally biased toward low complexity; that stretch reads RKSSPSSPAVR. Over residues 512-525 the composition is skewed to polar residues; that stretch reads LGRSQSFSHQQPSR. Ser-517 is subject to Phosphoserine. Thr-541 is modified (phosphothreonine). Ser-546 is subject to Phosphoserine.

As to quaternary structure, component of the multisubunit TRAPP II complex, which includes at least TRAPPC1, TRAPPC2, TRAPPC2L, TRAPPC3, TRAPPC4, TRAPPC5, TRAPPC6A/B, TRAPPC9, TRAPPC10 and TRAPPC14. TRAPPC9, TRAPPC10 and TRAPPC14 are specific subunits of the TRAPP II complex. Interacts with alpha-tubulin during mitosis. Interacts with RAB3IP (via the N-terminal region); this interaction mediates RAB3IP association with the TRAPP II complex. Interacts with TRAPPC10. Interacts with FBF1.

It is found in the cytoplasm. The protein localises to the cytoskeleton. The protein resides in the spindle. It localises to the vesicle. Its subcellular location is the midbody. In terms of biological role, specific subunit of the TRAPP (transport protein particle) II complex, a highly conserved vesicle tethering complex that functions in late Golgi trafficking as a membrane tether. TRAPPC14 is dispensable for TRAPPII complex integrity but mediates RAB3IP preciliary vesicle trafficking to the mother centriole during ciliogenesis. Modulates YAP1 activity as transcriptional regulator. The sequence is that of Trafficking protein particle complex subunit 14 from Mus musculus (Mouse).